The sequence spans 149 residues: Acyl carrier protein 1, chloroplastic (149 aa).

The transit peptide at 1–59 (MAHCLAAVSSFSPSAVRRRLSSQVANVVSSRSSVSFHSRQMSFVSISSRPSSLRFKICC) directs the protein to the chloroplast. The Carrier domain maps to 69–144 (KETVDKVCMI…DAANLIEKLV (76 aa)). Ser-104 carries the post-translational modification O-(pantetheine 4'-phosphoryl)serine.

Belongs to the acyl carrier protein (ACP) family. 4'-phosphopantetheine is transferred from CoA to a specific serine of apo-ACP by acpS. This modification is essential for activity because fatty acids are bound in thioester linkage to the sulfhydryl of the prosthetic group.

It is found in the plastid. Its subcellular location is the chloroplast. Its pathway is lipid metabolism; fatty acid biosynthesis. In terms of biological role, carrier of the growing fatty acid chain in fatty acid biosynthesis. This Hordeum vulgare (Barley) protein is Acyl carrier protein 1, chloroplastic (ACL1.1).